The sequence spans 285 residues: Iodotyrosine deiodinase 1 (285 aa).

Residues 1–21 form a helical membrane-spanning segment; that stretch reads MFLLTPVLVAVVCILVIWVFK. FMN-binding positions include 96-100 and 124-125; these read RRSIR and SG. Residues Ala126, Glu153, Tyr157, and Lys178 each coordinate 3,5-diiodo-L-tyrosine. Residues Ala126, Glu153, Tyr157, and Lys178 each coordinate 3-iodo-L-tyrosine. FMN-binding positions include 233-235 and Arg275; that span reads TTT.

This sequence belongs to the nitroreductase family. In terms of assembly, homodimer. Requires FMN as cofactor.

It is found in the cell membrane. It localises to the cytoplasmic vesicle membrane. The catalysed reaction is 2 iodide + L-tyrosine + 2 NADP(+) = 3,5-diiodo-L-tyrosine + 2 NADPH + H(+). It catalyses the reaction iodide + L-tyrosine + NADP(+) = 3-iodo-L-tyrosine + NADPH. It carries out the reaction 3-iodo-L-tyrosine + iodide + NADP(+) = 3,5-diiodo-L-tyrosine + NADPH + H(+). The enzyme catalyses L-tyrosine + chloride + NADP(+) = 3-chloro-L-tyrosine + NADPH. The catalysed reaction is bromide + L-tyrosine + NADP(+) = 3-bromo-L-tyrosine + NADPH. In terms of biological role, catalyzes the dehalogenation of halotyrosines such as 3-bromo-L-tyrosine, 3-chloro-L-tyrosine, 3-iodo-L-tyrosine and 3,5-diiodo-L-tyrosine. During thyroid hormone biosynthesis, facilitates iodide salvage by catalysing the oxidative NADPH-dependent deiodination of the halogenated by-products of thyroid hormone production, monoiodotyrosine (L-MIT) and diiodotyrosine (L-DIT). The scavanged iodide can then reenter the hormone-producing pathways. Acts more efficiently on 3-iodo-L-tyrosine than 3,5-diiodo-L-tyrosine. The polypeptide is Iodotyrosine deiodinase 1 (Iyd) (Rattus norvegicus (Rat)).